The primary structure comprises 149 residues: Large ribosomal subunit protein bL9 (149 aa).

The protein belongs to the bacterial ribosomal protein bL9 family.

In terms of biological role, binds to the 23S rRNA. The protein is Large ribosomal subunit protein bL9 of Leptospira interrogans serogroup Icterohaemorrhagiae serovar copenhageni (strain Fiocruz L1-130).